Reading from the N-terminus, the 1297-residue chain is Cingulin-like protein 1 (1297 aa).

Positions 1 to 550 (MELYFGEYQH…ELTQQTNEET (550 aa)) are head. A ZIM motif is present at residues 37–51 (AGSYGVSIRVQGIDG). Residues Ser-113, Ser-203, and Ser-257 each carry the phosphoserine modification. 4 disordered regions span residues 161–208 (NEVN…TSED), 245–306 (GVGE…TPTS), 364–396 (KPGL…AFPF), and 428–467 (QRSV…DGKV). The segment covering 197-206 (YGSQPNSPTS) has biased composition (polar residues). Residues 268 to 283 (ETKKNRPDVLPFRRQD) are compositionally biased toward basic and acidic residues. Residues Ser-284, Ser-298, and Ser-299 each carry the phosphoserine modification. A compositionally biased stretch (low complexity) spans 297-306 (SSSSSTTPTS). Basic residues predominate over residues 367-378 (LQRRGRSGKRNR). A compositionally biased stretch (basic and acidic residues) spans 379–389 (INPDDRKRSRS). Ser-389 and Ser-392 each carry phosphoserine. Ser-482 carries the phosphoserine modification. The interval 586 to 608 (SRAAGSAQGSNQAPNSPSEGNSL) is disordered. Residues 592 to 608 (AQGSNQAPNSPSEGNSL) are compositionally biased toward polar residues. Residues 604–1251 (EGNSLLDQKN…LQGQLNSLKK (648 aa)) adopt a coiled-coil conformation. A phosphoserine mark is found at Ser-678 and Ser-704. The segment at 1259–1297 (SSKVLDDSDDDDLSSDAGSLYEAPLSYAFPKDSTIASQI) is tail.

The protein belongs to the cingulin family. Homodimer or oligomer. Interacts with CD2AP and SH3BP1; probably part of a complex at cell junctions. In terms of tissue distribution, widely expressed. Highly expressed in the kidney and lung.

It is found in the cell junction. It localises to the tight junction. May be involved in anchoring the apical junctional complex, especially tight junctions, to actin-based cytoskeletons. The chain is Cingulin-like protein 1 from Mus musculus (Mouse).